The following is a 266-amino-acid chain: Glutamate racemase (266 aa).

Residues 9-10 (DS) and 41-42 (YG) each bind substrate. The active-site Proton donor/acceptor is Cys-72. Residue 73-74 (NT) participates in substrate binding. Cys-184 serves as the catalytic Proton donor/acceptor. 185 to 186 (TH) serves as a coordination point for substrate.

This sequence belongs to the aspartate/glutamate racemases family.

The enzyme catalyses L-glutamate = D-glutamate. Its pathway is cell wall biogenesis; peptidoglycan biosynthesis. Functionally, provides the (R)-glutamate required for cell wall biosynthesis. The polypeptide is Glutamate racemase (Staphylococcus haemolyticus).